Reading from the N-terminus, the 358-residue chain is Alanine racemase (358 aa).

Catalysis depends on K34, which acts as the Proton acceptor; specific for D-alanine. At K34 the chain carries N6-(pyridoxal phosphate)lysine. R129 is a binding site for substrate. Y254 functions as the Proton acceptor; specific for L-alanine in the catalytic mechanism. M302 serves as a coordination point for substrate.

The protein belongs to the alanine racemase family. Pyridoxal 5'-phosphate serves as cofactor.

The enzyme catalyses L-alanine = D-alanine. The protein operates within amino-acid biosynthesis; D-alanine biosynthesis; D-alanine from L-alanine: step 1/1. Catalyzes the interconversion of L-alanine and D-alanine. May also act on other amino acids. The polypeptide is Alanine racemase (alr) (Vibrio atlanticus (strain LGP32) (Vibrio splendidus (strain Mel32))).